The following is a 267-amino-acid chain: Probable ribose-5-phosphate isomerase 1 (267 aa).

Gly-2 is modified (N-acetylglycine). At Ser-92 the chain carries Phosphoserine.

This sequence belongs to the ribose 5-phosphate isomerase family. In terms of tissue distribution, expressed in roots, cotyledons, leaves and flowers.

It is found in the cytoplasm. The enzyme catalyses aldehydo-D-ribose 5-phosphate = D-ribulose 5-phosphate. It functions in the pathway carbohydrate degradation; pentose phosphate pathway; D-ribose 5-phosphate from D-ribulose 5-phosphate (non-oxidative stage): step 1/1. Catalyzes the reversible conversion of ribose-5-phosphate to ribulose 5-phosphate. The sequence is that of Probable ribose-5-phosphate isomerase 1 (RPI1) from Arabidopsis thaliana (Mouse-ear cress).